Reading from the N-terminus, the 69-residue chain is Cold shock-like protein CspC (69 aa).

One can recognise a CSD domain in the interval 6 to 66 (GQVKWFNESK…GQKGPAAVNV (61 aa)).

Its subcellular location is the cytoplasm. The sequence is that of Cold shock-like protein CspC (cspC) from Buchnera aphidicola subsp. Acyrthosiphon pisum (strain APS) (Acyrthosiphon pisum symbiotic bacterium).